Reading from the N-terminus, the 464-residue chain is Sushi repeat-containing protein SRPX (464 aa).

The N-terminal stretch at 1-28 is a signal peptide; that stretch reads MGSPGLRPTLLLPQVLLLLLALLHVPPS. S34 carries an O-linked (Xyl...) (chondroitin sulfate) serine glycan. Cystine bridges form between C57–C85, C69–C103, C89–C115, C120–C161, and C147–C174. Sushi domains are found at residues 57-117 and 118-176; these read CSPI…ICKQ and KRCP…SCVD. The HYR domain maps to 177 to 259; the sequence is MEPPRIKCPS…TCKFRVKVRV (83 aa). The Sushi 3 domain occupies 260–319; the sequence is RRCGKLNAPENGYMKCSSDGDNYGATCEFSCIGGYELQGSPARVCQSNLAWSGTEPSCAA. Intrachain disulfides connect C262/C304 and C290/C317.

As to expression, normal cells and cells transformed by human papillomavirus type 16 E6E7 and polyomavirus large T. Suppressed in cells transformed by oncogenes such as V-SRC, V-ABL, V-FPS, V-MOS, V-SIS, V-K-RAS, and polyomavirus middle T.

In Rattus norvegicus (Rat), this protein is Sushi repeat-containing protein SRPX (Srpx).